The primary structure comprises 313 residues: tRNA-cytidine(32) 2-sulfurtransferase (313 aa).

A PP-loop motif motif is present at residues 47 to 52 (SGGKDS). [4Fe-4S] cluster is bound by residues cysteine 122, cysteine 125, and cysteine 213. Positions 288-313 (PVGWQPEDDEDTEKRPPVRLDVLEIK) are disordered. Residues 299–313 (TEKRPPVRLDVLEIK) show a composition bias toward basic and acidic residues.

Belongs to the TtcA family. In terms of assembly, homodimer. The cofactor is Mg(2+). [4Fe-4S] cluster is required as a cofactor.

It is found in the cytoplasm. The enzyme catalyses cytidine(32) in tRNA + S-sulfanyl-L-cysteinyl-[cysteine desulfurase] + AH2 + ATP = 2-thiocytidine(32) in tRNA + L-cysteinyl-[cysteine desulfurase] + A + AMP + diphosphate + H(+). The protein operates within tRNA modification. In terms of biological role, catalyzes the ATP-dependent 2-thiolation of cytidine in position 32 of tRNA, to form 2-thiocytidine (s(2)C32). The sulfur atoms are provided by the cysteine/cysteine desulfurase (IscS) system. The polypeptide is tRNA-cytidine(32) 2-sulfurtransferase (Yersinia pseudotuberculosis serotype O:1b (strain IP 31758)).